A 157-amino-acid polypeptide reads, in one-letter code: S-ribosylhomocysteine lyase (157 aa).

3 residues coordinate Fe cation: H54, H58, and C126.

It belongs to the LuxS family. As to quaternary structure, homodimer. Fe cation is required as a cofactor.

It carries out the reaction S-(5-deoxy-D-ribos-5-yl)-L-homocysteine = (S)-4,5-dihydroxypentane-2,3-dione + L-homocysteine. Involved in the synthesis of autoinducer 2 (AI-2) which is secreted by bacteria and is used to communicate both the cell density and the metabolic potential of the environment. The regulation of gene expression in response to changes in cell density is called quorum sensing. Catalyzes the transformation of S-ribosylhomocysteine (RHC) to homocysteine (HC) and 4,5-dihydroxy-2,3-pentadione (DPD). The chain is S-ribosylhomocysteine lyase from Bacillus cereus (strain 03BB102).